A 185-amino-acid polypeptide reads, in one-letter code: Photosystem I assembly protein Ycf4 (185 aa).

2 consecutive transmembrane segments (helical) span residues 22 to 42 (FFFASILFGGALGFFLVGFSS) and 57 to 77 (IIFVPQGIVMCFYGIAGLFFS).

The protein belongs to the Ycf4 family.

Its subcellular location is the plastid. The protein resides in the chloroplast thylakoid membrane. In terms of biological role, seems to be required for the assembly of the photosystem I complex. This is Photosystem I assembly protein Ycf4 from Welwitschia mirabilis (Tree tumbo).